The chain runs to 466 residues: Ribulose bisphosphate carboxylase large chain (466 aa).

N6,N6,N6-trimethyllysine is present on Lys-5. Substrate is bound by residues Asn-114 and Thr-164. Residue Lys-166 is the Proton acceptor of the active site. Residue Lys-168 participates in substrate binding. Mg(2+)-binding residues include Lys-192, Asp-194, and Glu-195. The residue at position 192 (Lys-192) is an N6-carboxylysine. His-285 functions as the Proton acceptor in the catalytic mechanism. Residues Arg-286, His-318, and Ser-370 each coordinate substrate.

The protein belongs to the RuBisCO large chain family. Type I subfamily. Heterohexadecamer of 8 large chains and 8 small chains. Mg(2+) is required as a cofactor.

Its subcellular location is the plastid. The protein resides in the chloroplast. The catalysed reaction is 2 (2R)-3-phosphoglycerate + 2 H(+) = D-ribulose 1,5-bisphosphate + CO2 + H2O. It carries out the reaction D-ribulose 1,5-bisphosphate + O2 = 2-phosphoglycolate + (2R)-3-phosphoglycerate + 2 H(+). In terms of biological role, ruBisCO catalyzes two reactions: the carboxylation of D-ribulose 1,5-bisphosphate, the primary event in carbon dioxide fixation, as well as the oxidative fragmentation of the pentose substrate in the photorespiration process. Both reactions occur simultaneously and in competition at the same active site. The polypeptide is Ribulose bisphosphate carboxylase large chain (Lobelia sp).